A 92-amino-acid chain; its full sequence is Small ribosomal subunit protein uS19 (92 aa).

It belongs to the universal ribosomal protein uS19 family.

Functionally, protein S19 forms a complex with S13 that binds strongly to the 16S ribosomal RNA. The protein is Small ribosomal subunit protein uS19 of Shewanella putrefaciens (strain CN-32 / ATCC BAA-453).